Consider the following 209-residue polypeptide: Urease accessory protein UreG (209 aa).

10-17 contributes to the GTP binding site; the sequence is GPVGSGKT.

Belongs to the SIMIBI class G3E GTPase family. UreG subfamily. Homodimer. UreD, UreF and UreG form a complex that acts as a GTP-hydrolysis-dependent molecular chaperone, activating the urease apoprotein by helping to assemble the nickel containing metallocenter of UreC. The UreE protein probably delivers the nickel.

The protein resides in the cytoplasm. Its function is as follows. Facilitates the functional incorporation of the urease nickel metallocenter. This process requires GTP hydrolysis, probably effectuated by UreG. In Lysinibacillus sphaericus (strain C3-41), this protein is Urease accessory protein UreG.